A 113-amino-acid chain; its full sequence is UPF0102 protein Shal_4069 (113 aa).

The protein belongs to the UPF0102 family.

The chain is UPF0102 protein Shal_4069 from Shewanella halifaxensis (strain HAW-EB4).